Here is a 225-residue protein sequence, read N- to C-terminus: Uracil-DNA glycosylase (225 aa).

Asp65 acts as the Proton acceptor in catalysis.

It belongs to the uracil-DNA glycosylase (UDG) superfamily. UNG family.

It is found in the cytoplasm. The catalysed reaction is Hydrolyzes single-stranded DNA or mismatched double-stranded DNA and polynucleotides, releasing free uracil.. Its function is as follows. Excises uracil residues from the DNA which can arise as a result of misincorporation of dUMP residues by DNA polymerase or due to deamination of cytosine. The polypeptide is Uracil-DNA glycosylase (Bacillus cereus (strain G9842)).